A 389-amino-acid polypeptide reads, in one-letter code: Formate-dependent phosphoribosylglycinamide formyltransferase (389 aa).

N(1)-(5-phospho-beta-D-ribosyl)glycinamide-binding positions include 15–16 (EL) and glutamate 75. Residues arginine 107, lysine 148, 153-158 (SSGKGQ), 188-191 (EEFL), and glutamate 196 each bind ATP. Positions 112-302 (DLAAGELALR…EFELHLRAVL (191 aa)) constitute an ATP-grasp domain. 2 residues coordinate Mg(2+): glutamate 261 and glutamate 273. Residues aspartate 280, lysine 350, and 357–358 (RR) contribute to the N(1)-(5-phospho-beta-D-ribosyl)glycinamide site.

It belongs to the PurK/PurT family. As to quaternary structure, homodimer.

It catalyses the reaction N(1)-(5-phospho-beta-D-ribosyl)glycinamide + formate + ATP = N(2)-formyl-N(1)-(5-phospho-beta-D-ribosyl)glycinamide + ADP + phosphate + H(+). The protein operates within purine metabolism; IMP biosynthesis via de novo pathway; N(2)-formyl-N(1)-(5-phospho-D-ribosyl)glycinamide from N(1)-(5-phospho-D-ribosyl)glycinamide (formate route): step 1/1. In terms of biological role, involved in the de novo purine biosynthesis. Catalyzes the transfer of formate to 5-phospho-ribosyl-glycinamide (GAR), producing 5-phospho-ribosyl-N-formylglycinamide (FGAR). Formate is provided by PurU via hydrolysis of 10-formyl-tetrahydrofolate. This is Formate-dependent phosphoribosylglycinamide formyltransferase from Synechococcus sp. (strain WH7803).